The sequence spans 651 residues: Peptide-N(4)-(N-acetyl-beta-glucosaminyl)asparagine amidase (651 aa).

The PUB domain maps to 29-90 (EASRLLLTYA…EGETHMVFPK (62 aa)). Zn(2+) contacts are provided by Cys-246, Cys-249, Cys-279, and Cys-282. The active-site Nucleophile is the Cys-305. Active-site residues include His-332 and Asp-349. Residues 450–651 (EFGGRTSGSM…LEMIIKLADL (202 aa)) enclose the PAW domain.

The protein belongs to the transglutaminase-like superfamily. PNGase family. It depends on Zn(2+) as a cofactor.

It is found in the cytoplasm. The enzyme catalyses Hydrolysis of an N(4)-(acetyl-beta-D-glucosaminyl)asparagine residue in which the glucosamine residue may be further glycosylated, to yield a (substituted) N-acetyl-beta-D-glucosaminylamine and a peptide containing an aspartate residue.. Its function is as follows. Specifically deglycosylates the denatured form of N-linked glycoproteins in the cytoplasm and assists their proteasome-mediated degradation. Cleaves the beta-aspartyl-glucosamine (GlcNAc) of the glycan and the amide side chain of Asn, converting Asn to Asp. Prefers proteins containing high-mannose over those bearing complex type oligosaccharides. Can recognize misfolded proteins in the endoplasmic reticulum that are exported to the cytosol to be destroyed and deglycosylate them, while it has no activity toward native proteins. Deglycosylation is a prerequisite for subsequent proteasome-mediated degradation of some, but not all, misfolded glycoproteins. This chain is Peptide-N(4)-(N-acetyl-beta-glucosaminyl)asparagine amidase (NGLY1), found in Gallus gallus (Chicken).